Here is a 314-residue protein sequence, read N- to C-terminus: MASLIGNLELPRVSPNFLELRKAVRPYLKEHVHIGLSGGPDSLALVAAVLAEKSQVTAICIDHNLQTGSAEVTHNAAAMARHMGAQAIVKSIEVAPGEGMEAAAREARYAAFAQLTDEIWVAHTMDDQAETYLLGGLRGNPAGMKDASRRPELSIIRPLLGARRAHTHGACVELGLKPWHDPQNFDDAFRRVAIRNQVIPLLAQVHGGDPVPGLALAARRAVEDAEVVEGDVEKRRLEWQDGFPVTLAGEPTGLRRRMLADFLRGEGIAVTSRKLDAIDRLLTDWRGQGGVAVGKSDNGRLEVVRQSGKLKITD.

37 to 42 (SGGPDS) serves as a coordination point for ATP.

The protein belongs to the tRNA(Ile)-lysidine synthase family.

It is found in the cytoplasm. The enzyme catalyses cytidine(34) in tRNA(Ile2) + L-lysine + ATP = lysidine(34) in tRNA(Ile2) + AMP + diphosphate + H(+). Ligates lysine onto the cytidine present at position 34 of the AUA codon-specific tRNA(Ile) that contains the anticodon CAU, in an ATP-dependent manner. Cytidine is converted to lysidine, thus changing the amino acid specificity of the tRNA from methionine to isoleucine. The sequence is that of tRNA(Ile)-lysidine synthase from Corynebacterium glutamicum (strain ATCC 13032 / DSM 20300 / JCM 1318 / BCRC 11384 / CCUG 27702 / LMG 3730 / NBRC 12168 / NCIMB 10025 / NRRL B-2784 / 534).